We begin with the raw amino-acid sequence, 129 residues long: Replication initiation control protein YabA (129 aa).

Zn(2+) contacts are provided by His-103, Cys-105, Cys-119, and Cys-122.

It belongs to the YabA family. As to quaternary structure, homotetramer. Interacts with both DnaA and DnaN, acting as a bridge between these two proteins. Zn(2+) serves as cofactor.

It localises to the cytoplasm. It is found in the nucleoid. Involved in control of chromosome replication initiation. Inhibits the cooperative binding of DnaA to the oriC region, thus negatively regulating initiation of chromosome replication. Inhibits the ability of DnaA-ATP to form a helix on DNA; does not disassemble preformed DnaA-DNA helices. Decreases the residence time of DnaA on the chromosome at its binding sites (oriC, replication forks and promoter-binding sites). Tethers DnaA to the replication machinery via the DNA polymerase beta sliding clamp subunit (dnaN). Associates with oriC and other DnaA targets on the chromosome in a DnaA-dependent manner. This is Replication initiation control protein YabA from Listeria monocytogenes serotype 4b (strain CLIP80459).